A 656-amino-acid polypeptide reads, in one-letter code: ATP-dependent RNA helicase MRH4, mitochondrial (656 aa).

A mitochondrion-targeting transit peptide spans methionine 1 to histidine 46. Positions glutamine 42 to glutamine 125 are disordered. A compositionally biased stretch (polar residues) spans methionine 60 to valine 71. A compositionally biased stretch (basic and acidic residues) spans asparagine 96–glutamine 125. The Q motif signature appears at threonine 157–arginine 190. The region spanning glutamine 210–leucine 431 is the Helicase ATP-binding domain. Alanine 223–threonine 230 lines the ATP pocket. Residues alanine 246 to lysine 270 form a disordered region. Positions aspartate 378–aspartate 381 match the DEAD box motif. The region spanning aspartate 480–isoleucine 656 is the Helicase C-terminal domain.

The protein belongs to the DEAD box helicase family. MRH4 subfamily.

It is found in the mitochondrion. The enzyme catalyses ATP + H2O = ADP + phosphate + H(+). Its function is as follows. ATP-binding RNA helicase involved in mitochondrial RNA metabolism. Required for maintenance of mitochondrial DNA. The polypeptide is ATP-dependent RNA helicase MRH4, mitochondrial (MRH4) (Coccidioides immitis (strain RS) (Valley fever fungus)).